The sequence spans 280 residues: Chlorophyll a-b binding protein CP29 (280 aa).

Residues 1-42 (MVFKFPTPPGTQKKAGTTATKPAPKATTKKVATSTGTRSGGV) form a disordered region. N-acetylvaline is present on V2. T7 is subject to Phosphothreonine; in State 1 and State 2. Residues 10 to 37 (GTQKKAGTTATKPAPKATTKKVATSTGT) are compositionally biased toward low complexity. Position 17 is a phosphothreonine; in State 2 (T17). Position 33 is a phosphothreonine; in State 1 and State 2 (T33). Y47 is a chlorophyll b binding site. F73 and S79 together coordinate chlorophyll a. S103 carries the post-translational modification Phosphoserine; in State 2. Residues E137 and H140 each coordinate chlorophyll a. Helical transmembrane passes span 143–163 (WAML…VSWV) and 176–196 (AGLS…ILVG). Residues S183, E199, and R202 each contribute to the chlorophyll b site. Positions 238, 241, 243, and 255 each coordinate chlorophyll a. The chain crosses the membrane as a helical span at residues 244–264 (LAMVSFFGYGVQALSTGEGAL).

This sequence belongs to the light-harvesting chlorophyll a/b-binding (LHC) protein family. The LHC complex consists of chlorophyll a-b binding proteins. Requires Binds at least 14 chlorophylls (8 Chl-a and 6 Chl-b) and carotenoids such as lutein and neoxanthin. as cofactor. Reversible phosphorylation plays a role in the State transition process and determines the affinity of LHCII for PSI and PSII.

It localises to the plastid. The protein localises to the chloroplast thylakoid membrane. In terms of biological role, the light-harvesting complex (LHC) functions as a light receptor, it captures and delivers excitation energy to photosystems with which it is closely associated. CP29 facilitates the State 1 to State 2 transition, where State I is induced by excess photosystem I (PSI) light and State 2 is induced by excess photosystem II (PSII) light. This is Chlorophyll a-b binding protein CP29 from Chlamydomonas reinhardtii (Chlamydomonas smithii).